The chain runs to 508 residues: Bifunctional purine biosynthesis protein PurH (508 aa).

An MGS-like domain is found at 1 to 145 (MTKRALISVS…KNHQYVTVIV (145 aa)).

Belongs to the PurH family.

The enzyme catalyses (6R)-10-formyltetrahydrofolate + 5-amino-1-(5-phospho-beta-D-ribosyl)imidazole-4-carboxamide = 5-formamido-1-(5-phospho-D-ribosyl)imidazole-4-carboxamide + (6S)-5,6,7,8-tetrahydrofolate. The catalysed reaction is IMP + H2O = 5-formamido-1-(5-phospho-D-ribosyl)imidazole-4-carboxamide. The protein operates within purine metabolism; IMP biosynthesis via de novo pathway; 5-formamido-1-(5-phospho-D-ribosyl)imidazole-4-carboxamide from 5-amino-1-(5-phospho-D-ribosyl)imidazole-4-carboxamide (10-formyl THF route): step 1/1. It participates in purine metabolism; IMP biosynthesis via de novo pathway; IMP from 5-formamido-1-(5-phospho-D-ribosyl)imidazole-4-carboxamide: step 1/1. The polypeptide is Bifunctional purine biosynthesis protein PurH (Lysinibacillus sphaericus (strain C3-41)).